Here is a 143-residue protein sequence, read N- to C-terminus: uncharacterized protein (143 aa).

An N-terminal signal peptide occupies residues 1 to 24 (MKKMLMLAFTFLLALTIHVGEASA).

This is an uncharacterized protein from Bacillus subtilis (strain 168).